Reading from the N-terminus, the 61-residue chain is Short neurotoxin 4 (61 aa).

4 disulfides stabilise this stretch: Cys3-Cys23, Cys17-Cys40, Cys42-Cys53, and Cys54-Cys59.

This sequence belongs to the three-finger toxin family. Short-chain subfamily. Type I alpha-neurotoxin sub-subfamily. As to expression, expressed by the venom gland.

Its subcellular location is the secreted. Its function is as follows. Binds to muscle nicotinic acetylcholine receptor (nAChR) and inhibit acetylcholine from binding to the receptor, thereby impairing neuromuscular transmission. The sequence is that of Short neurotoxin 4 from Naja annulifera (Banded Egyptian cobra).